Here is a 472-residue protein sequence, read N- to C-terminus: UDP-N-acetylmuramate--L-alanine ligase (472 aa).

An ATP-binding site is contributed by 122-128; the sequence is GSHGKTT.

The protein belongs to the MurCDEF family.

The protein resides in the cytoplasm. The enzyme catalyses UDP-N-acetyl-alpha-D-muramate + L-alanine + ATP = UDP-N-acetyl-alpha-D-muramoyl-L-alanine + ADP + phosphate + H(+). Its pathway is cell wall biogenesis; peptidoglycan biosynthesis. In terms of biological role, cell wall formation. The sequence is that of UDP-N-acetylmuramate--L-alanine ligase from Myxococcus xanthus (strain DK1622).